The chain runs to 100 residues: MSTGPTAATGSNRRLQQTQNQVDEVVDIMRVNVDKVLERDQKLSELDDRADALQAGASQFETSAAKLKRKYWWKNCKMWAIGITVLVIFIIIIIVWVVSS.

S2 bears the N-acetylserine mark. Topologically, residues 2-77 (STGPTAATGS…KRKYWWKNCK (76 aa)) are cytoplasmic. Positions 14–74 (RLQQTQNQVD…AKLKRKYWWK (61 aa)) constitute a v-SNARE coiled-coil homology domain. Glycyl lysine isopeptide (Lys-Gly) (interchain with G-Cter in ubiquitin) cross-links involve residues K66, K68, and K77. The chain crosses the membrane as a helical; Anchor for type IV membrane protein span at residues 78–98 (MWAIGITVLVIFIIIIIVWVV). The Vesicular segment spans residues 99-100 (SS).

Belongs to the synaptobrevin family. As to quaternary structure, interacts with POPDC1 (via the C-terminus cytoplasmic tail). Interacts with BCAP31; involved in VAMP3 export from the endoplasmic reticulum. Interacts with BAIAP3; this interaction is increased in the presence of calcium. Interacts with PICALM. Post-translationally, ubiquitinated by RNF167 at Lys-66, Lys-68 and Lys-77, regulating the recycling endosome pathway. In terms of processing, (Microbial infection) Targeted and hydrolyzed by C.botulinum neurotoxin type B (BoNT/B, botB) which hydrolyzes the 59-Gln-|-Phe-60 bond and probably inhibits neurotransmitter release. (Microbial infection) Targeted and hydrolyzed by C.botulinum neurotoxin type D (BoNT/D, botD) which hydrolyzes the 42-Lys-|-Leu-43 bond and probably inhibits neurotransmitter release. Note that humans are not known to be infected by C.botulinum type D. Post-translationally, (Microbial infection) Targeted and hydrolyzed by C.botulinum neurotoxin type F (BoNT/F, botF) which hydrolyzes the 41-Gln-|-Lys-42 bond and probably inhibits neurotransmitter release.

The protein localises to the early endosome membrane. Its subcellular location is the recycling endosome membrane. It is found in the synapse. The protein resides in the synaptosome. Functionally, SNARE involved in vesicular transport from the late endosomes to the trans-Golgi network. The chain is Vesicle-associated membrane protein 3 (VAMP3) from Homo sapiens (Human).